The primary structure comprises 284 residues: UDP-N-acetylenolpyruvoylglucosamine reductase (284 aa).

The FAD-binding PCMH-type domain occupies 12–174 (KIGGRVKYLV…TRVMMSFKRE (163 aa)). R153 is a catalytic residue. The Proton donor role is filled by S203. E274 is an active-site residue.

It belongs to the MurB family. FAD serves as cofactor.

Its subcellular location is the cytoplasm. The catalysed reaction is UDP-N-acetyl-alpha-D-muramate + NADP(+) = UDP-N-acetyl-3-O-(1-carboxyvinyl)-alpha-D-glucosamine + NADPH + H(+). Its pathway is cell wall biogenesis; peptidoglycan biosynthesis. Its function is as follows. Cell wall formation. This chain is UDP-N-acetylenolpyruvoylglucosamine reductase, found in Thermotoga petrophila (strain ATCC BAA-488 / DSM 13995 / JCM 10881 / RKU-1).